We begin with the raw amino-acid sequence, 423 residues long: Pentamidine resistance factor, mitochondrial (423 aa).

Residues 199-219 form a helical membrane-spanning segment; it reads PVFFTLVFIFEEVSVLIFTFF.

Interacts with COX18. This interaction may be essential for its insertion into mitochondrial inner membrane.

It is found in the mitochondrion inner membrane. Its function is as follows. Probably involved in mitochondrial export. Confers resistance to the anti-pneumocystis carinii drug pentamidine. May act by the removal of pentamidine, or its damage targets, from the matrix by an active-transport mechanism. In Saccharomyces cerevisiae (strain ATCC 204508 / S288c) (Baker's yeast), this protein is Pentamidine resistance factor, mitochondrial (PNT1).